A 246-amino-acid polypeptide reads, in one-letter code: TLC domain-containing protein 2 (246 aa).

The next 6 helical transmembrane spans lie at 5–25 (SVILTTGSSVGFFKLVNYGLG), 43–63 (ISTSFVHSLITGVWSVLCFCM), 79–99 (SHALVSVSIGYFIYDFLDMVI), 107–127 (WELLFHHVVVITCFGISVLTC), 128–148 (RYVGFAVVALLVEINSVFLHL), and 199–219 (FSYTIGSVGLAIMTAMNIVLF). The TLC domain occupies 35 to 231 (RNAWKWNNIS…LMRSDFMKAS (197 aa)).

This sequence belongs to the TLCD family.

Its subcellular location is the cell membrane. In terms of biological role, regulates the composition and fluidity of the plasma membrane. Inhibits the incorporation of membrane-fluidizing phospholipids containing omega-3 long-chain polyunsaturated fatty acids (LCPUFA) and thereby promotes membrane rigidity. Does not appear to have any effect on LCPUFA synthesis. The chain is TLC domain-containing protein 2 (tlcd2) from Danio rerio (Zebrafish).